Here is a 66-residue protein sequence, read N- to C-terminus: Large ribosomal subunit protein uL30 (66 aa).

The protein belongs to the universal ribosomal protein uL30 family. In terms of assembly, part of the 50S ribosomal subunit.

This Azorhizobium caulinodans (strain ATCC 43989 / DSM 5975 / JCM 20966 / LMG 6465 / NBRC 14845 / NCIMB 13405 / ORS 571) protein is Large ribosomal subunit protein uL30.